Here is a 345-residue protein sequence, read N- to C-terminus: Methylthioribose-1-phosphate isomerase (345 aa).

Residues 47–49, Arg90, and Gln197 contribute to the substrate site; that span reads RGA. Asp238 serves as the catalytic Proton donor. 248-249 serves as a coordination point for substrate; it reads NK.

This sequence belongs to the eIF-2B alpha/beta/delta subunits family. MtnA subfamily.

The enzyme catalyses 5-(methylsulfanyl)-alpha-D-ribose 1-phosphate = 5-(methylsulfanyl)-D-ribulose 1-phosphate. The protein operates within amino-acid biosynthesis; L-methionine biosynthesis via salvage pathway; L-methionine from S-methyl-5-thio-alpha-D-ribose 1-phosphate: step 1/6. Its function is as follows. Catalyzes the interconversion of methylthioribose-1-phosphate (MTR-1-P) into methylthioribulose-1-phosphate (MTRu-1-P). The sequence is that of Methylthioribose-1-phosphate isomerase from Thermoanaerobacter pseudethanolicus (strain ATCC 33223 / 39E) (Clostridium thermohydrosulfuricum).